A 354-amino-acid chain; its full sequence is Cysteine proteinase A (354 aa).

The signal sequence occupies residues 1–24; the sequence is MARRNPLLFAIVVTILFVVCYGSA. Residues 25-125 constitute a propeptide, activation peptide; the sequence is LIAQTPPPVD…HKEDVHVDDS (101 aa). Cystine bridges form between cysteine 150-cysteine 191, cysteine 184-cysteine 229, and cysteine 282-cysteine 330. Residue cysteine 153 is part of the active site. An N-linked (GlcNAc...) asparagine glycan is attached at asparagine 208. Residues histidine 289 and asparagine 309 contribute to the active site.

This sequence belongs to the peptidase C1 family.

In Leishmania mexicana, this protein is Cysteine proteinase A (LMCPA).